The sequence spans 336 residues: UDP-N-acetylglucosamine--N-acetylmuramyl-(pentapeptide) pyrophosphoryl-undecaprenol N-acetylglucosamine transferase (336 aa).

UDP-N-acetyl-alpha-D-glucosamine contacts are provided by asparagine 102, arginine 144, serine 172, and glutamine 264.

The protein belongs to the glycosyltransferase 28 family. MurG subfamily.

It is found in the cell membrane. It catalyses the reaction di-trans,octa-cis-undecaprenyl diphospho-N-acetyl-alpha-D-muramoyl-L-alanyl-D-glutamyl-meso-2,6-diaminopimeloyl-D-alanyl-D-alanine + UDP-N-acetyl-alpha-D-glucosamine = di-trans,octa-cis-undecaprenyl diphospho-[N-acetyl-alpha-D-glucosaminyl-(1-&gt;4)]-N-acetyl-alpha-D-muramoyl-L-alanyl-D-glutamyl-meso-2,6-diaminopimeloyl-D-alanyl-D-alanine + UDP + H(+). It functions in the pathway cell wall biogenesis; peptidoglycan biosynthesis. Its function is as follows. Cell wall formation. Catalyzes the transfer of a GlcNAc subunit on undecaprenyl-pyrophosphoryl-MurNAc-pentapeptide (lipid intermediate I) to form undecaprenyl-pyrophosphoryl-MurNAc-(pentapeptide)GlcNAc (lipid intermediate II). This is UDP-N-acetylglucosamine--N-acetylmuramyl-(pentapeptide) pyrophosphoryl-undecaprenol N-acetylglucosamine transferase from Rubrobacter xylanophilus (strain DSM 9941 / JCM 11954 / NBRC 16129 / PRD-1).